Here is a 110-residue protein sequence, read N- to C-terminus: Large ribosomal subunit protein uL22 (110 aa).

It belongs to the universal ribosomal protein uL22 family. Part of the 50S ribosomal subunit.

Functionally, this protein binds specifically to 23S rRNA; its binding is stimulated by other ribosomal proteins, e.g. L4, L17, and L20. It is important during the early stages of 50S assembly. It makes multiple contacts with different domains of the 23S rRNA in the assembled 50S subunit and ribosome. The globular domain of the protein is located near the polypeptide exit tunnel on the outside of the subunit, while an extended beta-hairpin is found that lines the wall of the exit tunnel in the center of the 70S ribosome. The polypeptide is Large ribosomal subunit protein uL22 (Shewanella denitrificans (strain OS217 / ATCC BAA-1090 / DSM 15013)).